Here is a 331-residue protein sequence, read N- to C-terminus: tRNA N6-adenosine threonylcarbamoyltransferase (331 aa).

Positions 109, 113, and 130 each coordinate Fe cation. Substrate contacts are provided by residues 130–134 (YLSGG), aspartate 162, aspartate 183, and serine 262. Aspartate 290 serves as a coordination point for Fe cation.

It belongs to the KAE1 / TsaD family. Requires Fe(2+) as cofactor.

It localises to the cytoplasm. The enzyme catalyses L-threonylcarbamoyladenylate + adenosine(37) in tRNA = N(6)-L-threonylcarbamoyladenosine(37) in tRNA + AMP + H(+). Its function is as follows. Required for the formation of a threonylcarbamoyl group on adenosine at position 37 (t(6)A37) in tRNAs that read codons beginning with adenine. Is probably involved in the transfer of the threonylcarbamoyl moiety of threonylcarbamoyl-AMP (TC-AMP) to the N6 group of A37. The sequence is that of tRNA N6-adenosine threonylcarbamoyltransferase from Metallosphaera sedula (strain ATCC 51363 / DSM 5348 / JCM 9185 / NBRC 15509 / TH2).